Here is a 446-residue protein sequence, read N- to C-terminus: MQKKYFGTDGIRGKVGNSLINAEFMLKLGWAVGRVLANSHSATVLIGKDTRISGYMIESALQAGLSAAGVNIKLTGPMPTPAIAYLTHSVRADAGIVISASHNHYPDNGVKFFNKDGFKLSDELELAIEKQIDKPMKTVVADRLGKAARMNEAHGRYIEFCKSTFPSNLTLKGLKIVVDCANGAAYAVAPSIFHELGAEVVAIADDPDGFNINQTCGATDTAHLQEMVVKHNADVGIAFDGDGDRLIMVDHHGLRVDGDELLCIMAIDRFYLKENAPLGVVGTIMSNLGLEQTLKRHHIAFERSPVGDRYVLDLMQQKGWFLGGESSGHIVDLGFTTTGDGVITALQILRIMQQAEKPLADLKKVMVKHPQVLINVPIKGILDIAQNPNIKKAITEAEKQLNGAGRILLRPSGTEPVIRVMVEGSDEGIVRQTAEMLAAAVQQSTL.

S101 acts as the Phosphoserine intermediate in catalysis. Mg(2+) contacts are provided by S101, D240, D242, and D244. At S101 the chain carries Phosphoserine.

The protein belongs to the phosphohexose mutase family. Mg(2+) serves as cofactor. Activated by phosphorylation.

The enzyme catalyses alpha-D-glucosamine 1-phosphate = D-glucosamine 6-phosphate. Catalyzes the conversion of glucosamine-6-phosphate to glucosamine-1-phosphate. This Coxiella burnetii (strain CbuK_Q154) (Coxiella burnetii (strain Q154)) protein is Phosphoglucosamine mutase.